A 149-amino-acid chain; its full sequence is Endoribonuclease YbeY (149 aa).

Residues His106, His110, and His116 each contribute to the Zn(2+) site.

The protein belongs to the endoribonuclease YbeY family. Zn(2+) serves as cofactor.

It is found in the cytoplasm. In terms of biological role, single strand-specific metallo-endoribonuclease involved in late-stage 70S ribosome quality control and in maturation of the 3' terminus of the 16S rRNA. This is Endoribonuclease YbeY from Methylobacillus flagellatus (strain ATCC 51484 / DSM 6875 / VKM B-1610 / KT).